A 198-amino-acid polypeptide reads, in one-letter code: dTTP/UTP pyrophosphatase (198 aa).

Asp78 functions as the Proton acceptor in the catalytic mechanism.

Belongs to the Maf family. YhdE subfamily. The cofactor is a divalent metal cation.

It is found in the cytoplasm. It catalyses the reaction dTTP + H2O = dTMP + diphosphate + H(+). The catalysed reaction is UTP + H2O = UMP + diphosphate + H(+). Its function is as follows. Nucleoside triphosphate pyrophosphatase that hydrolyzes dTTP and UTP. May have a dual role in cell division arrest and in preventing the incorporation of modified nucleotides into cellular nucleic acids. In Chromobacterium violaceum (strain ATCC 12472 / DSM 30191 / JCM 1249 / CCUG 213 / NBRC 12614 / NCIMB 9131 / NCTC 9757 / MK), this protein is dTTP/UTP pyrophosphatase.